Consider the following 1755-residue polypeptide: Transposon Ty1-MR2 Gag-Pol polyprotein (1755 aa).

Composition is skewed to polar residues over residues 1-10 (MESQQLSNYP), 48-60 (TKAN…TPAS), and 127-152 (QSQF…GNTF). 3 disordered regions span residues 1 to 93 (MESQ…MMTQ), 126 to 173 (PQSQ…RPPP), and 352 to 421 (GSRN…SKST). The span at 153–165 (TDSSSADSDMTST) shows a compositional bias: low complexity. An RNA-binding region spans residues 299 to 401 (NNGIHINNKV…NSKSKTARAH (103 aa)). A compositionally biased stretch (low complexity) spans 402-418 (NVSTSNNSPSTDNDSIS). Residue serine 416 is modified to Phosphoserine. Catalysis depends on aspartate 461, which acts as the For protease activity; shared with dimeric partner. Positions 583-640 (NVHTSESTRKYPYPFIHRMLAHANAQTIRYSLKNNTITYFNESDVDWSSAIDYQCPDC) are integrase-type zinc finger-like. Residues 660–835 (NSYEPFQYLH…AGLDISTLLP (176 aa)) form the Integrase catalytic domain. Positions 671 and 736 each coordinate Mg(2+). 3 disordered regions span residues 956 to 1087 (SKAV…ETEK), 1092 to 1111 (RSPS…NIVP), and 1130 to 1186 (DLPL…EDNE). Positions 960–969 (SPTDSTPPST) are enriched in low complexity. Over residues 1005–1015 (STPQISNIEST) the composition is skewed to polar residues. Positions 1038–1053 (ESSHASKSKDFRHSDS) are enriched in basic and acidic residues. Polar residues-rich tracts occupy residues 1054 to 1082 (YSEN…QISD) and 1101 to 1111 (PENNSSHNIVP). The Bipartite nuclear localization signal motif lies at 1178-1212 (KKRSLEDNETEIKVSRDTWNTKNMRSLEPPRSKKR). In terms of domain architecture, Reverse transcriptase Ty1/copia-type spans 1338 to 1476 (NNYYITQLDI…DILGLEIKYQ (139 aa)). Mg(2+) contacts are provided by aspartate 1346, aspartate 1427, aspartate 1428, aspartate 1610, glutamate 1652, and aspartate 1685. Residues 1610-1752 (DASYGNQPYY…IKTFKLLTNK (143 aa)) form the RNase H Ty1/copia-type domain.

The capsid protein forms a homotrimer, from which the VLPs are assembled. The protease is a homodimer, whose active site consists of two apposed aspartic acid residues. Initially, virus-like particles (VLPs) are composed of the structural unprocessed proteins Gag and Gag-Pol, and also contain the host initiator methionine tRNA (tRNA(i)-Met) which serves as a primer for minus-strand DNA synthesis, and a dimer of genomic Ty RNA. Processing of the polyproteins occurs within the particle and proceeds by an ordered pathway, called maturation. First, the protease (PR) is released by autocatalytic cleavage of the Gag-Pol polyprotein yielding capsid protein p45 and a Pol-p154 precursor protein. This cleavage is a prerequisite for subsequent processing of Pol-p154 at the remaining sites to release the mature structural and catalytic proteins. Maturation takes place prior to the RT reaction and is required to produce transposition-competent VLPs.

Its subcellular location is the cytoplasm. The protein resides in the nucleus. It catalyses the reaction DNA(n) + a 2'-deoxyribonucleoside 5'-triphosphate = DNA(n+1) + diphosphate. It carries out the reaction Endonucleolytic cleavage to 5'-phosphomonoester.. Its function is as follows. Capsid protein (CA) is the structural component of the virus-like particle (VLP), forming the shell that encapsulates the retrotransposons dimeric RNA genome. The particles are assembled from trimer-clustered units and there are holes in the capsid shells that allow for the diffusion of macromolecules. CA also has nucleocapsid-like chaperone activity, promoting primer tRNA(i)-Met annealing to the multipartite primer-binding site (PBS), dimerization of Ty1 RNA and initiation of reverse transcription. Functionally, the aspartyl protease (PR) mediates the proteolytic cleavages of the Gag and Gag-Pol polyproteins after assembly of the VLP. In terms of biological role, reverse transcriptase/ribonuclease H (RT) is a multifunctional enzyme that catalyzes the conversion of the retro-elements RNA genome into dsDNA within the VLP. The enzyme displays a DNA polymerase activity that can copy either DNA or RNA templates, and a ribonuclease H (RNase H) activity that cleaves the RNA strand of RNA-DNA heteroduplexes during plus-strand synthesis and hydrolyzes RNA primers. The conversion leads to a linear dsDNA copy of the retrotransposon that includes long terminal repeats (LTRs) at both ends. Integrase (IN) targets the VLP to the nucleus, where a subparticle preintegration complex (PIC) containing at least integrase and the newly synthesized dsDNA copy of the retrotransposon must transit the nuclear membrane. Once in the nucleus, integrase performs the integration of the dsDNA into the host genome. This chain is Transposon Ty1-MR2 Gag-Pol polyprotein (TY1B-MR2), found in Saccharomyces cerevisiae (strain ATCC 204508 / S288c) (Baker's yeast).